We begin with the raw amino-acid sequence, 325 residues long: GTPase Era (325 aa).

One can recognise an Era-type G domain in the interval 30–198 (HCGFVAIVGR…KKHVRDHLPK (169 aa)). Positions 38 to 45 (GRPNVGKS) are G1. 38 to 45 (GRPNVGKS) is a GTP binding site. Residues 64–68 (QTTRH) form a G2 region. Positions 85 to 88 (DTPG) are G3. GTP contacts are provided by residues 85–89 (DTPGL) and 147–150 (NKVD). The tract at residues 147–150 (NKVD) is G4. Positions 177–179 (ISA) are G5. In terms of domain architecture, KH type-2 spans 221 to 307 (VREKLMRFTG…YLETWVKVKS (87 aa)).

This sequence belongs to the TRAFAC class TrmE-Era-EngA-EngB-Septin-like GTPase superfamily. Era GTPase family. As to quaternary structure, monomer.

It is found in the cytoplasm. The protein localises to the cell inner membrane. Functionally, an essential GTPase that binds both GDP and GTP, with rapid nucleotide exchange. Plays a role in 16S rRNA processing and 30S ribosomal subunit biogenesis and possibly also in cell cycle regulation and energy metabolism. This is GTPase Era from Vibrio cholerae serotype O1 (strain ATCC 39315 / El Tor Inaba N16961).